Reading from the N-terminus, the 325-residue chain is MIARIWSGESPLWRLLLPLSWLYGLVSGAIRLSYKLGLKRAWRAPVPVVVVGNLTAGGNGKTPVVIWLVEKLQQRGVRVGVVSRGYGGKAAAYPLLLTPETTTAEAGDEPVLIYQRTGAPVAVAPERAAAVKAILAAHNVQIIITDDGLQHYRLARDIEIVVIDGVRRFGNGWWLPAGPMRERASRLKTVDAAIVNGGVARAGEIPMQLAPGLAVNLRTGARCDVAQLSNIVAMAGIGHPPRFFATLEACGAHPQKCVPLADHQTLAPADVQALVGEGQTLVMTEKDAVKCRAFAEDNWWFLPVDAHLSGEQPDKLLQHITSLVR.

Residue 55–62 coordinates ATP; sequence TAGGNGKT.

It belongs to the LpxK family.

It catalyses the reaction a lipid A disaccharide + ATP = a lipid IVA + ADP + H(+). It functions in the pathway glycolipid biosynthesis; lipid IV(A) biosynthesis; lipid IV(A) from (3R)-3-hydroxytetradecanoyl-[acyl-carrier-protein] and UDP-N-acetyl-alpha-D-glucosamine: step 6/6. Its function is as follows. Transfers the gamma-phosphate of ATP to the 4'-position of a tetraacyldisaccharide 1-phosphate intermediate (termed DS-1-P) to form tetraacyldisaccharide 1,4'-bis-phosphate (lipid IVA). The chain is Tetraacyldisaccharide 4'-kinase from Salmonella agona (strain SL483).